Here is a 124-residue protein sequence, read N- to C-terminus: U13-hexatoxin-Mg1a (124 aa).

A signal peptide spans 1–17 (MKLSALVFVASVMLVAA). Positions 18–52 (SPVKDVEEPVETHLAADLKTIEELAKYEEAAVQKR) are excised as a propeptide. 4 cysteine pairs are disulfide-bonded: Cys54-Cys72, Cys65-Cys78, Cys69-Cys116, and Cys71-Cys87.

In terms of tissue distribution, expressed by the venom gland.

The protein localises to the secreted. No toxicity is observed upon intracranial injection into mice and intrathorax injection into crickets. The protein is U13-hexatoxin-Mg1a of Macrothele gigas (Japanese funnel web spider).